We begin with the raw amino-acid sequence, 246 residues long: Ribonuclease 3 (246 aa).

The 130-residue stretch at 18–147 (FKELQKKIGI…FIGALYLDQG (130 aa)) folds into the RNase III domain. Mg(2+) is bound at residue Glu60. The active site involves Asp64. Mg(2+) contacts are provided by Asp133 and Glu136. The active site involves Glu136. In terms of domain architecture, DRBM spans 173–242 (DFKSQLQELV…AQMALQKLKT (70 aa)).

The protein belongs to the ribonuclease III family. As to quaternary structure, homodimer. Requires Mg(2+) as cofactor.

Its subcellular location is the cytoplasm. It carries out the reaction Endonucleolytic cleavage to 5'-phosphomonoester.. Functionally, digests double-stranded RNA. Involved in the processing of primary rRNA transcript to yield the immediate precursors to the large and small rRNAs (23S and 16S). Processes some mRNAs, and tRNAs when they are encoded in the rRNA operon. Processes pre-crRNA and tracrRNA of type II CRISPR loci if present in the organism. The sequence is that of Ribonuclease 3 from Geobacillus sp. (strain WCH70).